The primary structure comprises 438 residues: Ribosomal protein uS12 methylthiotransferase RimO (438 aa).

One can recognise an MTTase N-terminal domain in the interval 1–115 (MKYFILSLGC…LDKLLADLGE (115 aa)). Positions 10, 46, 78, 150, 154, and 157 each coordinate [4Fe-4S] cluster. One can recognise a Radical SAM core domain in the interval 136–366 (KSNEVYRYIK…MEVQQEISLN (231 aa)). One can recognise a TRAM domain in the interval 369–437 (KALVGKKIPV…IYDLKGEFIN (69 aa)).

It belongs to the methylthiotransferase family. RimO subfamily. The cofactor is [4Fe-4S] cluster.

The protein localises to the cytoplasm. It catalyses the reaction L-aspartate(89)-[ribosomal protein uS12]-hydrogen + (sulfur carrier)-SH + AH2 + 2 S-adenosyl-L-methionine = 3-methylsulfanyl-L-aspartate(89)-[ribosomal protein uS12]-hydrogen + (sulfur carrier)-H + 5'-deoxyadenosine + L-methionine + A + S-adenosyl-L-homocysteine + 2 H(+). Its function is as follows. Catalyzes the methylthiolation of an aspartic acid residue of ribosomal protein uS12. This Carboxydothermus hydrogenoformans (strain ATCC BAA-161 / DSM 6008 / Z-2901) protein is Ribosomal protein uS12 methylthiotransferase RimO.